The chain runs to 473 residues: GDP-fucose protein O-fucosyltransferase 2 (473 aa).

A signal peptide spans 1–25 (MKNMIYNLISISLYSLIIILTDIYA). Residues 59–63 (GEGFN), 283–285 (HLR), and 379–380 (RF) each bind GDP-beta-L-fucose. Glu-60 (proton acceptor) is an active-site residue.

It belongs to the glycosyltransferase 68 family.

Its subcellular location is the endoplasmic reticulum. The catalysed reaction is L-seryl-[protein] + GDP-beta-L-fucose = 3-O-(alpha-L-fucosyl)-L-seryl-[protein] + GDP + H(+). The enzyme catalyses L-threonyl-[protein] + GDP-beta-L-fucose = 3-O-(alpha-L-fucosyl)-L-threonyl-[protein] + GDP + H(+). It participates in protein modification; protein glycosylation. In terms of biological role, catalyzes the reaction that attaches fucose through an O-glycosidic linkage to a conserved serine or threonine residue in the consensus sequence C1-X-X-S/T-C2 of thrombospondin type I repeats (TSRs) where C1 and C2 are the first and second cysteines of the repeat, respectively. O-fucosylates sporozoite proteins CSP and TRAP. O-fucosylation regulates stability and intracellular trafficking of TRAP but not of CSP. Dispensable for parasite transmission to the mosquito vector and/or infection of the vertebrate host hepatocytes. This chain is GDP-fucose protein O-fucosyltransferase 2, found in Plasmodium berghei (strain Anka).